The chain runs to 1129 residues: PAN2-PAN3 deadenylation complex catalytic subunit PAN2 (1129 aa).

WD repeat units lie at residues 20 to 60, 104 to 146, 148 to 183, 186 to 226, and 280 to 319; these read PPAV…YTSY, PDFK…DTLP, DAQY…VIKV, GHTG…FSLK, and LYDS…HFPE. Residues 320 to 457 are linker; sequence YSNPTEFADH…DLHLDDVTRK (138 aa). Positions 396–427 are disordered; the sequence is RTKRRNQIEVTRQTDRSSDSLTPPKFLSEKSR. The 373-residue stretch at 458 to 830 folds into the USP domain; that stretch reads DVPAMYGNVE…LPSVLTFQTK (373 aa). An Exonuclease domain is found at 880 to 1052; the sequence is VAIDAEFIRL…IEDATTALKL (173 aa). A divalent metal cation-binding residues include Asp-883, Glu-885, Asp-992, and Asp-1045. Residues 1083–1129 are disordered; the sequence is APGSGNRNSMPAGMTATGAGRDTPEPMTTPKKGGAFGGVGFRSPMRR.

This sequence belongs to the peptidase C19 family. PAN2 subfamily. As to quaternary structure, forms a heterotrimer with an asymmetric homodimer of the regulatory subunit PAN3 to form the poly(A)-nuclease (PAN) deadenylation complex. The cofactor is a divalent metal cation.

Its subcellular location is the cytoplasm. It catalyses the reaction Exonucleolytic cleavage of poly(A) to 5'-AMP.. With respect to regulation, positively regulated by the regulatory subunit PAN3. Its function is as follows. Catalytic subunit of the poly(A)-nuclease (PAN) deadenylation complex, one of two cytoplasmic mRNA deadenylases involved in mRNA turnover. PAN specifically shortens poly(A) tails of RNA and the activity is stimulated by poly(A)-binding protein PAB1. PAN deadenylation is followed by rapid degradation of the shortened mRNA tails by the CCR4-NOT complex. Deadenylated mRNAs are then degraded by two alternative mechanisms, namely exosome-mediated 3'-5' exonucleolytic degradation, or deadenylation-dependent mRNA decaping and subsequent 5'-3' exonucleolytic degradation by XRN1. May also be involved in post-transcriptional maturation of mRNA poly(A) tails. The chain is PAN2-PAN3 deadenylation complex catalytic subunit PAN2 from Phaeosphaeria nodorum (strain SN15 / ATCC MYA-4574 / FGSC 10173) (Glume blotch fungus).